The sequence spans 98 residues: MRNYEVVFVIRPDLEAEATTAVVEKFTQLITDQGGQVTRVDQWGKKRMAYEVRKYREGYYVLVEFKGTPAVAQELERVLKISDDVIRYLITRLEEEAS.

It belongs to the bacterial ribosomal protein bS6 family.

In terms of biological role, binds together with bS18 to 16S ribosomal RNA. This chain is Small ribosomal subunit protein bS6, found in Moorella thermoacetica (strain ATCC 39073 / JCM 9320).